Reading from the N-terminus, the 91-residue chain is Small ribosomal subunit protein uS19 (91 aa).

Belongs to the universal ribosomal protein uS19 family.

Its function is as follows. Protein S19 forms a complex with S13 that binds strongly to the 16S ribosomal RNA. The chain is Small ribosomal subunit protein uS19 (rpsS) from Mycoplasmopsis pulmonis (strain UAB CTIP) (Mycoplasma pulmonis).